The following is a 264-amino-acid chain: S-adenosylmethionine decarboxylase proenzyme (264 aa).

Serine 112 serves as the catalytic Schiff-base intermediate with substrate; via pyruvic acid. A Pyruvic acid (Ser); by autocatalysis modification is found at serine 112. Histidine 117 acts as the Proton acceptor; for processing activity in catalysis. The active-site Proton donor; for catalytic activity is the cysteine 140.

The protein belongs to the prokaryotic AdoMetDC family. Type 2 subfamily. As to quaternary structure, heterooctamer of four alpha and four beta chains arranged as a tetramer of alpha/beta heterodimers. Pyruvate serves as cofactor. Is synthesized initially as an inactive proenzyme. Formation of the active enzyme involves a self-maturation process in which the active site pyruvoyl group is generated from an internal serine residue via an autocatalytic post-translational modification. Two non-identical subunits are generated from the proenzyme in this reaction, and the pyruvate is formed at the N-terminus of the alpha chain, which is derived from the carboxyl end of the proenzyme. The post-translation cleavage follows an unusual pathway, termed non-hydrolytic serinolysis, in which the side chain hydroxyl group of the serine supplies its oxygen atom to form the C-terminus of the beta chain, while the remainder of the serine residue undergoes an oxidative deamination to produce ammonia and the pyruvoyl group blocking the N-terminus of the alpha chain.

It carries out the reaction S-adenosyl-L-methionine + H(+) = S-adenosyl 3-(methylsulfanyl)propylamine + CO2. Its pathway is amine and polyamine biosynthesis; S-adenosylmethioninamine biosynthesis; S-adenosylmethioninamine from S-adenosyl-L-methionine: step 1/1. Catalyzes the decarboxylation of S-adenosylmethionine to S-adenosylmethioninamine (dcAdoMet), the propylamine donor required for the synthesis of the polyamines spermine and spermidine from the diamine putrescine. In Yersinia pseudotuberculosis serotype I (strain IP32953), this protein is S-adenosylmethionine decarboxylase proenzyme.